Here is a 157-residue protein sequence, read N- to C-terminus: 2-C-methyl-D-erythritol 2,4-cyclodiphosphate synthase (157 aa).

Positions 8 and 10 each coordinate a divalent metal cation. Residues 8-10 (DVH) and 34-35 (HS) contribute to the 4-CDP-2-C-methyl-D-erythritol 2-phosphate site. Histidine 42 serves as a coordination point for a divalent metal cation. 4-CDP-2-C-methyl-D-erythritol 2-phosphate-binding positions include 56-58 (DIG), 61-65 (FPDTD), 100-106 (AQAPKML), 132-135 (TTTE), phenylalanine 139, and arginine 142.

It belongs to the IspF family. As to quaternary structure, homotrimer. A divalent metal cation is required as a cofactor.

It carries out the reaction 4-CDP-2-C-methyl-D-erythritol 2-phosphate = 2-C-methyl-D-erythritol 2,4-cyclic diphosphate + CMP. It functions in the pathway isoprenoid biosynthesis; isopentenyl diphosphate biosynthesis via DXP pathway; isopentenyl diphosphate from 1-deoxy-D-xylulose 5-phosphate: step 4/6. Its function is as follows. Involved in the biosynthesis of isopentenyl diphosphate (IPP) and dimethylallyl diphosphate (DMAPP), two major building blocks of isoprenoid compounds. Catalyzes the conversion of 4-diphosphocytidyl-2-C-methyl-D-erythritol 2-phosphate (CDP-ME2P) to 2-C-methyl-D-erythritol 2,4-cyclodiphosphate (ME-CPP) with a corresponding release of cytidine 5-monophosphate (CMP). In Photorhabdus laumondii subsp. laumondii (strain DSM 15139 / CIP 105565 / TT01) (Photorhabdus luminescens subsp. laumondii), this protein is 2-C-methyl-D-erythritol 2,4-cyclodiphosphate synthase.